The primary structure comprises 132 residues: Fumarate reductase subunit C (132 aa).

Helical transmembrane passes span A36–L56, I70–Y90, and I110–M130.

This sequence belongs to the FrdC family. As to quaternary structure, part of an enzyme complex containing four subunits: a flavoprotein (FrdA), an iron-sulfur protein (FrdB), and two hydrophobic anchor proteins (FrdC and FrdD).

The protein resides in the cell inner membrane. Anchors the catalytic components of the fumarate reductase complex to the cell membrane, binds quinones. The chain is Fumarate reductase subunit C from Pasteurella multocida (strain Pm70).